Reading from the N-terminus, the 264-residue chain is Small ribosomal subunit protein uS3 (264 aa).

A KH type-2 domain is found at 39–107 (VRDFLKKKLK…PVHVNIEEIR (69 aa)). The interval 211–264 (NDAPVVEEPQDDRRRRPGRPEGRRREGEGRPGGNRRGGAGAGRRAAPGDAKSGE) is disordered. Residues 221-239 (DDRRRRPGRPEGRRREGEG) show a composition bias toward basic and acidic residues. Residues 240–251 (RPGGNRRGGAGA) show a composition bias toward gly residues.

The protein belongs to the universal ribosomal protein uS3 family. In terms of assembly, part of the 30S ribosomal subunit. Forms a tight complex with proteins S10 and S14.

Binds the lower part of the 30S subunit head. Binds mRNA in the 70S ribosome, positioning it for translation. In Cupriavidus pinatubonensis (strain JMP 134 / LMG 1197) (Cupriavidus necator (strain JMP 134)), this protein is Small ribosomal subunit protein uS3.